Reading from the N-terminus, the 585-residue chain is A-type ATP synthase subunit A (585 aa).

232–239 (GPFGSGKT) contacts ATP.

The protein belongs to the ATPase alpha/beta chains family. Has multiple subunits with at least A(3), B(3), C, D, E, F, H, I and proteolipid K(x).

The protein localises to the cell membrane. It catalyses the reaction ATP + H2O + 4 H(+)(in) = ADP + phosphate + 5 H(+)(out). In terms of biological role, component of the A-type ATP synthase that produces ATP from ADP in the presence of a proton gradient across the membrane. The A chain is the catalytic subunit. The protein is A-type ATP synthase subunit A of Methanosphaera stadtmanae (strain ATCC 43021 / DSM 3091 / JCM 11832 / MCB-3).